The following is a 1694-amino-acid chain: Clathrin heavy chain (1694 aa).

Positions 1-478 are globular terminal domain; the sequence is MTNLPIRFQE…HDRKLALSIY (478 aa). WD40-like repeat stretches follow at residues 23–67, 68–107, 108–149, 150–195, 196–256, 257–300, and 301–329; these read SIGF…KQMK, TDAAIMNPKEPILALKIGQVLQLISIEQKMQLKSCQMQEP, LEFW…PDLQ, NTEI…QSIE, GHAA…EIGA, SDFP…ISNE, and NIFVTAFEESTNGIIAVNRKGQVLSVSID. Residues 448 to 464 are binding site for the uncoating ATPase, involved in lattice disassembly; that stretch reads EKWLTEDKLECSEQLGD. The tract at residues 479–522 is flexible linker; that stretch reads YRANASDKVITLFAETGEFDKIIAYCKKFNYKPDFMFLLQRMAN. Positions 523–1694 are heavy chain arm; sequence ANPMGAADFA…QQNYNQYGGF (1172 aa). CHCR repeat units follow at residues 537-681, 687-829, 834-973, 980-1125, 1129-1270, 1275-1421, and 1424-1567; these read KEEG…QNLQ, AVSY…QEDY, IMSV…SLID, LPES…VKEC, FIKA…FRLA, INII…LLIN, and LSVL…NSAF. Residues 1214–1523 are involved in binding clathrin light chain; sequence AAKVLYTNIS…YLYKKNNRWA (310 aa). The tract at residues 1551-1694 is trimerization; it reads GEELLQYFVD…QQNYNQYGGF (144 aa). A coiled-coil region spans residues 1610–1640; the sequence is KVDQLVDDFKARQKKTEEEKEQQNIESSQYQ.

The protein belongs to the clathrin heavy chain family. In terms of assembly, clathrin coats are formed from molecules containing 3 heavy chains and 3 light chains.

Its subcellular location is the cytoplasmic vesicle membrane. It localises to the membrane. It is found in the coated pit. Its function is as follows. Clathrin is the major protein of the polyhedral coat of coated pits and vesicles. This is Clathrin heavy chain (chcA) from Dictyostelium discoideum (Social amoeba).